Reading from the N-terminus, the 510-residue chain is Maturase K (510 aa).

Belongs to the intron maturase 2 family. MatK subfamily.

Its subcellular location is the plastid. It is found in the chloroplast. In terms of biological role, usually encoded in the trnK tRNA gene intron. Probably assists in splicing its own and other chloroplast group II introns. The chain is Maturase K from Spirodela intermedia (Intermediate duckweed).